A 550-amino-acid chain; its full sequence is Eukaryotic translation initiation factor 3 subunit L (550 aa).

A disordered region spans residues 1–20; sequence MVRDSFDGGHTGDPERDLAY. The 195-residue stretch at 309–503 folds into the PCI domain; the sequence is EATKIFVNCL…IDDSTTDLDF (195 aa).

This sequence belongs to the eIF-3 subunit L family. As to quaternary structure, component of the eukaryotic translation initiation factor 3 (eIF-3) complex.

It is found in the cytoplasm. Its function is as follows. Component of the eukaryotic translation initiation factor 3 (eIF-3) complex, which is involved in protein synthesis of a specialized repertoire of mRNAs and, together with other initiation factors, stimulates binding of mRNA and methionyl-tRNAi to the 40S ribosome. The eIF-3 complex specifically targets and initiates translation of a subset of mRNAs involved in cell proliferation. The protein is Eukaryotic translation initiation factor 3 subunit L of Brugia malayi (Filarial nematode worm).